A 229-amino-acid chain; its full sequence is Sugar fermentation stimulation protein homolog (229 aa).

Belongs to the SfsA family.

This Clostridium novyi (strain NT) protein is Sugar fermentation stimulation protein homolog.